A 477-amino-acid polypeptide reads, in one-letter code: Putative 4-(hydroxymethyl)benzenesulfonate dehydrogenase TsaD2 (477 aa).

NAD(+) contacts are provided by residues 154-155, 178-181, and 230-231; these read WN, KAAE, and GS. The Proton acceptor role is filled by glutamate 252. Leucine 253 is a binding site for NAD(+). The active-site Nucleophile is cysteine 286. Position 381 (glutamate 381) interacts with NAD(+).

It belongs to the aldehyde dehydrogenase family. As to quaternary structure, homodimer.

The catalysed reaction is 4-(hydroxymethyl)benzenesulfonate + NAD(+) = 4-formylbenzenesulfonate + NADH + H(+). In terms of biological role, involved in the toluene-4-sulfonate degradation pathway. Does not discriminate between the sulfonate and the carboxyl substituents and can also be involved in the p-toluenecarboxylate degradation pathway. This Comamonas testosteroni (Pseudomonas testosteroni) protein is Putative 4-(hydroxymethyl)benzenesulfonate dehydrogenase TsaD2 (tsaD2).